The following is a 399-amino-acid chain: Lipase member K (399 aa).

An N-terminal signal peptide occupies residues 1–19 (MWQLLAAACWMLLLGSMYG). Residues 78-378 (PAVYLQHGLI…HYNHVDFYLG (301 aa)) enclose the AB hydrolase-1 domain. Ser172 serves as the catalytic Nucleophile. The cysteines at positions 246 and 255 are disulfide-linked. Residues Asn271 and Asn327 are each glycosylated (N-linked (GlcNAc...) asparagine). Catalysis depends on charge relay system residues Asp343 and His372.

It belongs to the AB hydrolase superfamily. Lipase family. In terms of tissue distribution, exclusively expressed in the epidermis within the granular keratinocytes.

The protein localises to the secreted. Plays a highly specific role in the last step of keratinocyte differentiation. May have an essential function in lipid metabolism of the most differentiated epidermal layers. This chain is Lipase member K (LIPK), found in Homo sapiens (Human).